We begin with the raw amino-acid sequence, 82 residues long: Exodeoxyribonuclease 7 small subunit (82 aa).

It belongs to the XseB family. In terms of assembly, heterooligomer composed of large and small subunits.

The protein resides in the cytoplasm. It carries out the reaction Exonucleolytic cleavage in either 5'- to 3'- or 3'- to 5'-direction to yield nucleoside 5'-phosphates.. Functionally, bidirectionally degrades single-stranded DNA into large acid-insoluble oligonucleotides, which are then degraded further into small acid-soluble oligonucleotides. In Coxiella burnetii (strain CbuG_Q212) (Coxiella burnetii (strain Q212)), this protein is Exodeoxyribonuclease 7 small subunit.